The chain runs to 100 residues: Putative septation protein SpoVG (100 aa).

It belongs to the SpoVG family.

Functionally, could be involved in septation. The chain is Putative septation protein SpoVG from Staphylococcus haemolyticus (strain JCSC1435).